Reading from the N-terminus, the 373-residue chain is Protein phosphatase 1K, mitochondrial (373 aa).

Residues 95–347 (KVGCSTQLGK…DNSTAIVVPF (253 aa)) enclose the PPM-type phosphatase domain. 3 residues coordinate Mg(2+): D128, G129, and D338.

The protein belongs to the PP2C family. Mg(2+) serves as cofactor. Mn(2+) is required as a cofactor.

The protein resides in the mitochondrion matrix. It catalyses the reaction O-phospho-L-seryl-[protein] + H2O = L-seryl-[protein] + phosphate. It carries out the reaction O-phospho-L-threonyl-[protein] + H2O = L-threonyl-[protein] + phosphate. This Xenopus laevis (African clawed frog) protein is Protein phosphatase 1K, mitochondrial (ppm1k).